We begin with the raw amino-acid sequence, 245 residues long: uncharacterized protein (245 aa).

6 helical membrane passes run 38-58, 68-88, 100-120, 129-149, 194-214, and 217-237; these read IYPA…AIFI, TIEL…QGYF, IWSL…LILA, VLFI…FVSA, VNNI…FLMN, and IAFI…LIIH.

It belongs to the acyltransferase 3 family.

Its subcellular location is the cell membrane. This is an uncharacterized protein from Haemophilus influenzae (strain ATCC 51907 / DSM 11121 / KW20 / Rd).